The primary structure comprises 215 residues: Large ribosomal subunit protein uL3 (215 aa).

The segment at 134-166 (MAHGSKNHRAPGSIGAGTTPGRVFPGKRMPGRM) is disordered.

The protein belongs to the universal ribosomal protein uL3 family. In terms of assembly, part of the 50S ribosomal subunit. Forms a cluster with proteins L14 and L19.

In terms of biological role, one of the primary rRNA binding proteins, it binds directly near the 3'-end of the 23S rRNA, where it nucleates assembly of the 50S subunit. In Gloeobacter violaceus (strain ATCC 29082 / PCC 7421), this protein is Large ribosomal subunit protein uL3.